The sequence spans 189 residues: Cancer/testis antigen family 45 member A10 (189 aa).

Belongs to the CT45 family.

Its subcellular location is the nucleus. This chain is Cancer/testis antigen family 45 member A10, found in Homo sapiens (Human).